The sequence spans 291 residues: Nucleotide-binding protein RALTA_A0325 (291 aa).

G8 to S15 is an ATP binding site. D57–S60 lines the GTP pocket.

It belongs to the RapZ-like family.

Its function is as follows. Displays ATPase and GTPase activities. In Cupriavidus taiwanensis (strain DSM 17343 / BCRC 17206 / CCUG 44338 / CIP 107171 / LMG 19424 / R1) (Ralstonia taiwanensis (strain LMG 19424)), this protein is Nucleotide-binding protein RALTA_A0325.